Consider the following 421-residue polypeptide: Synaptotagmin-12 (421 aa).

Topologically, residues 1-18 (MAVDVTEYHLSVIKSPPG) are vesicular. The helical transmembrane segment at 19–39 (WEVGVYAAGALALLGIAAVSL) threads the bilayer. The Cytoplasmic segment spans residues 40–421 (WKLWTSGSFP…VSMWHPVRRN (382 aa)). S97 bears the Phosphoserine; by PKA mark. A phosphoserine mark is found at S99 and S214. C2 domains are found at residues 152–272 (TLGQ…SGWL) and 283–416 (AVGE…SMWH).

The protein belongs to the synaptotagmin family. Homodimer. Can also form heterodimers. Interacts with SYT1. In terms of processing, phosphorylation of Ser-97 is required for mossy-fiber long-term potentiation. In terms of tissue distribution, expressed in the brain, specifically in neurons of the cerebellum, cortex, hippocampus, olfactory bulb, brainstem and spinal cord (at protein level).

The protein resides in the cytoplasmic vesicle. Its subcellular location is the secretory vesicle. It is found in the synaptic vesicle membrane. Functionally, synaptic vesicle phosphoprotein that enhances spontaneous neurotransmitter release but does not effect induced neurotransmitter release. Unlike other synaptotagmins, it does not bind Ca(2+) or phospholipids. Essential for mossy-fiber long-term potentiation in the hippocampus. The polypeptide is Synaptotagmin-12 (Rattus norvegicus (Rat)).